Consider the following 257-residue polypeptide: MLILISPAKTLDYQSPLATTRYTQPELLEYSQQLIGIARKLSAPQIGKLMSISDKLADLNATRFHDWHPDFTPQNARQAILAFKGDVYTGLQAETLTEDDFDFAQQHLRMLSGLYGVLRPLDLMQPYRLEMGIRLENPRGKDLYQFWGDTITEKLNQALRDQGDDIVINLASDEYFKSVKTPKLQGQLIKPVFLDEKNGKFKVISFYAKKARGLMSRYIIENRLTQPEQLKAFNSEGYFFDADASEKGELVFKRHEQ.

The Helix-hairpin-helix motif lies at 35–66; that stretch reads IGIARKLSAPQIGKLMSISDKLADLNATRFHD.

The protein belongs to the UPF0246 family.

The protein localises to the cytoplasm. Protects bacteria from neutrophil-related defense upon infection of mammals. Binds DNA. This is DNA-binding and peroxide stress resistance protein YaaA from Klebsiella pneumoniae subsp. pneumoniae (strain HS11286).